Reading from the N-terminus, the 498-residue chain is Cytochrome c-552 (498 aa).

The N-terminal stretch at methionine 1–alanine 31 is a signal peptide. Histidine 119 serves as a coordination point for heme c. Cysteine 148, cysteine 151, and lysine 152 together coordinate heme. 6 residues coordinate heme c: cysteine 186, cysteine 189, histidine 190, cysteine 228, cysteine 231, and histidine 232. Ca(2+)-binding residues include glutamate 234, tyrosine 235, lysine 280, and glutamine 282. Residue tyrosine 235 participates in substrate binding. A substrate-binding site is contributed by histidine 283. The heme c site is built by histidine 294, cysteine 301, cysteine 304, histidine 305, histidine 319, cysteine 332, cysteine 335, histidine 336, and histidine 411.

This sequence belongs to the cytochrome c-552 family. It depends on Ca(2+) as a cofactor. Heme c serves as cofactor.

Its subcellular location is the periplasm. The catalysed reaction is 6 Fe(III)-[cytochrome c] + NH4(+) + 2 H2O = 6 Fe(II)-[cytochrome c] + nitrite + 8 H(+). The protein operates within nitrogen metabolism; nitrate reduction (assimilation). Catalyzes the reduction of nitrite to ammonia, consuming six electrons in the process. This Porphyromonas gingivalis (strain ATCC BAA-308 / W83) protein is Cytochrome c-552.